The following is a 376-amino-acid chain: Succinyl-diaminopimelate desuccinylase (376 aa).

H67 contributes to the Zn(2+) binding site. D69 is a catalytic residue. A Zn(2+)-binding site is contributed by D100. Residue E134 is the Proton acceptor of the active site. Positions 135, 163, and 349 each coordinate Zn(2+).

It belongs to the peptidase M20A family. DapE subfamily. In terms of assembly, homodimer. It depends on Zn(2+) as a cofactor. Requires Co(2+) as cofactor.

It catalyses the reaction N-succinyl-(2S,6S)-2,6-diaminopimelate + H2O = (2S,6S)-2,6-diaminopimelate + succinate. It participates in amino-acid biosynthesis; L-lysine biosynthesis via DAP pathway; LL-2,6-diaminopimelate from (S)-tetrahydrodipicolinate (succinylase route): step 3/3. Its function is as follows. Catalyzes the hydrolysis of N-succinyl-L,L-diaminopimelic acid (SDAP), forming succinate and LL-2,6-diaminopimelate (DAP), an intermediate involved in the bacterial biosynthesis of lysine and meso-diaminopimelic acid, an essential component of bacterial cell walls. In Xanthomonas campestris pv. campestris (strain 8004), this protein is Succinyl-diaminopimelate desuccinylase.